We begin with the raw amino-acid sequence, 397 residues long: Acetate kinase (397 aa).

Asn8 lines the Mg(2+) pocket. An ATP-binding site is contributed by Lys15. Substrate is bound at residue Arg89. Residue Asp146 is the Proton donor/acceptor of the active site. ATP contacts are provided by residues 206 to 210 (HIGNG), 281 to 283 (DLR), and 328 to 332 (GVGEN). Residue Glu381 coordinates Mg(2+).

This sequence belongs to the acetokinase family. Homodimer. It depends on Mg(2+) as a cofactor. Requires Mn(2+) as cofactor.

Its subcellular location is the cytoplasm. The enzyme catalyses acetate + ATP = acetyl phosphate + ADP. Its pathway is metabolic intermediate biosynthesis; acetyl-CoA biosynthesis; acetyl-CoA from acetate: step 1/2. Functionally, catalyzes the formation of acetyl phosphate from acetate and ATP. Can also catalyze the reverse reaction. This Oceanobacillus iheyensis (strain DSM 14371 / CIP 107618 / JCM 11309 / KCTC 3954 / HTE831) protein is Acetate kinase.